Consider the following 488-residue polypeptide: 3-octaprenyl-4-hydroxybenzoate carboxy-lyase (488 aa).

N172 is a Mn(2+) binding site. Residues 175–177 (IYR), 189–191 (RWL), and 194–195 (RG) contribute to the prenylated FMN site. E238 is a binding site for Mn(2+). The active-site Proton donor is D287.

Belongs to the UbiD family. Homohexamer. Prenylated FMN is required as a cofactor. Requires Mn(2+) as cofactor.

The protein localises to the cell membrane. The enzyme catalyses a 4-hydroxy-3-(all-trans-polyprenyl)benzoate + H(+) = a 2-(all-trans-polyprenyl)phenol + CO2. It participates in cofactor biosynthesis; ubiquinone biosynthesis. In terms of biological role, catalyzes the decarboxylation of 3-octaprenyl-4-hydroxy benzoate to 2-octaprenylphenol, an intermediate step in ubiquinone biosynthesis. The sequence is that of 3-octaprenyl-4-hydroxybenzoate carboxy-lyase from Legionella pneumophila (strain Lens).